The sequence spans 198 residues: uncharacterized protein (198 aa).

It localises to the plastid. The protein localises to the chloroplast. This is an uncharacterized protein from Antithamnion sp. (Red alga).